Here is a 735-residue protein sequence, read N- to C-terminus: Catalase-peroxidase (735 aa).

Polar residues predominate over residues 1 to 26 (MENQNRQNASQCPFHGSITNQSSNRT). Residues 1–29 (MENQNRQNASQCPFHGSITNQSSNRTTNK) form a disordered region. Residues 100–223 (WHSAGTYRIG…LAASVMGLIY (124 aa)) constitute a cross-link (tryptophyl-tyrosyl-methioninium (Trp-Tyr) (with M-249)). Histidine 101 acts as the Proton acceptor in catalysis. Positions 223–249 (YVNPEGPDGKPDPKAAARDIRETFRRM) form a cross-link, tryptophyl-tyrosyl-methioninium (Tyr-Met) (with W-100). Histidine 264 is a binding site for heme b.

The protein belongs to the peroxidase family. Peroxidase/catalase subfamily. As to quaternary structure, homodimer or homotetramer. Requires heme b as cofactor. Formation of the three residue Trp-Tyr-Met cross-link is important for the catalase, but not the peroxidase activity of the enzyme.

The enzyme catalyses H2O2 + AH2 = A + 2 H2O. It carries out the reaction 2 H2O2 = O2 + 2 H2O. Bifunctional enzyme with both catalase and broad-spectrum peroxidase activity. This is Catalase-peroxidase from Geobacillus thermodenitrificans (strain NG80-2).